We begin with the raw amino-acid sequence, 112 residues long: Conotoxin vil14.4 (112 aa).

Positions 1–22 are cleaved as a signal peptide; the sequence is MGFRVLVLVVMATTSALPFTFF. Residues 23–85 constitute a propeptide that is removed on maturation; that stretch reads EEPGRSPFRP…FAELSVGQRR (63 aa). 2 disulfide bridges follow: Cys91–Cys111 and Cys95–Cys107.

It belongs to the conotoxin R superfamily. As to expression, expressed by the venom duct.

The protein resides in the secreted. This Conus villepinii (Villepin's cone) protein is Conotoxin vil14.4.